The primary structure comprises 231 residues: Cytidylate kinase (231 aa).

18–26 contributes to the ATP binding site; sequence GPSGTGKSS.

The protein belongs to the cytidylate kinase family. Type 1 subfamily.

Its subcellular location is the cytoplasm. The catalysed reaction is CMP + ATP = CDP + ADP. It carries out the reaction dCMP + ATP = dCDP + ADP. In Streptomyces coelicolor (strain ATCC BAA-471 / A3(2) / M145), this protein is Cytidylate kinase.